The sequence spans 361 residues: Aromatic amino acid aminotransferase (361 aa).

N6-(pyridoxal phosphate)lysine is present on Lys215.

Belongs to the class-II pyridoxal-phosphate-dependent aminotransferase family. Homodimer. It depends on pyridoxal 5'-phosphate as a cofactor.

It catalyses the reaction an aromatic L-alpha-amino acid + 2-oxoglutarate = an aromatic oxo-acid + L-glutamate. In terms of biological role, aminotransferase that catalyzes the conversion of aromatic amino acids and 2-oxoglutarate into corresponding aromatic oxo acids and L-glutamate. This Mycolicibacterium smegmatis (strain ATCC 700084 / mc(2)155) (Mycobacterium smegmatis) protein is Aromatic amino acid aminotransferase.